A 425-amino-acid polypeptide reads, in one-letter code: Trigger factor (425 aa).

The PPIase FKBP-type domain occupies 158–231 (GDLVRVNMEV…VEEVYKRTLP (74 aa)).

Belongs to the FKBP-type PPIase family. Tig subfamily.

It localises to the cytoplasm. The catalysed reaction is [protein]-peptidylproline (omega=180) = [protein]-peptidylproline (omega=0). Its function is as follows. Involved in protein export. Acts as a chaperone by maintaining the newly synthesized protein in an open conformation. Functions as a peptidyl-prolyl cis-trans isomerase. This is Trigger factor (tig) from Thermotoga maritima (strain ATCC 43589 / DSM 3109 / JCM 10099 / NBRC 100826 / MSB8).